Here is a 429-residue protein sequence, read N- to C-terminus: CinA-like protein (429 aa).

It belongs to the CinA family.

The protein is CinA-like protein of Chlorobium limicola (strain DSM 245 / NBRC 103803 / 6330).